The primary structure comprises 516 residues: rRNA N(6)-adenosine-methyltransferase ZCCHC4 (516 aa).

8 residues coordinate Zn(2+): C40, H42, C66, C75, C127, C130, H142, and H145. The GRF-type zinc finger occupies 40 to 84 (CPHELGPTLLFVKVNQGKEETRRFYACSACRDRKDCNFFQWEDEK). Residues 174–177 (QYLF), R204, D227, 245–246 (NM), and D278 each bind S-adenosyl-L-methionine. Positions 339-360 (QVVDYDNHALYKHGKTGRKQSP) are regulatory loop. 16 residues coordinate Zn(2+): C383, C386, H396, C397, C400, C403, H413, C414, C417, C420, H427, C428, C431, C434, H439, and C441. Positions 398–448 (EHCNSCTSKDGRKWNHCFLCKKCVKPSWIHCSICNHCALPDHSCKGPKDGC) constitute a DHHC domain. A CCHC-type zinc finger spans residues 446–463 (DGCFICGELDHKRSACPN). A compositionally biased stretch (basic residues) spans 472–484 (KAVRKQKQRKSNK). The interval 472-516 (KAVRKQKQRKSNKMKMETTKGQSMNHTSATRKKKRRERTHQYLCS) is disordered. Over residues 490–499 (TKGQSMNHTS) the composition is skewed to polar residues. Residues 500 to 509 (ATRKKKRRER) show a composition bias toward basic residues.

It belongs to the ZCCHC4 family. As to quaternary structure, interacts with components of the ASC-1 complex TRIP4, ASCC1, ASCC2 and ASCC3. Interact with AHCYL1 and AHCYL2. Interact with YTHDC2.

The protein localises to the cytoplasm. The protein resides in the nucleus. It localises to the nucleolus. The catalysed reaction is adenosine(4220) in 28S rRNA + S-adenosyl-L-methionine = N(6)-methyladenosine(4220) in 28S rRNA + S-adenosyl-L-homocysteine + H(+). RRNA N6-methyltransferase that specifically methylates the adenine in position 4220 of 28S rRNA. N6-methylation of adenine(4220) in 28S rRNA is required for translation. The protein is rRNA N(6)-adenosine-methyltransferase ZCCHC4 of Bos taurus (Bovine).